Here is a 207-residue protein sequence, read N- to C-terminus: Ribonuclease HII (207 aa).

Positions 12–201 constitute an RNase H type-2 domain; it reads DLVAGVDEVG…VRAAWEAREG (190 aa). Residues Asp18, Glu19, and Asp110 each contribute to the a divalent metal cation site.

It belongs to the RNase HII family. Mn(2+) is required as a cofactor. It depends on Mg(2+) as a cofactor.

It is found in the cytoplasm. It carries out the reaction Endonucleolytic cleavage to 5'-phosphomonoester.. In terms of biological role, endonuclease that specifically degrades the RNA of RNA-DNA hybrids. The polypeptide is Ribonuclease HII (Pseudomonas putida (strain ATCC 47054 / DSM 6125 / CFBP 8728 / NCIMB 11950 / KT2440)).